Here is a 57-residue protein sequence, read N- to C-terminus: uncharacterized protein (57 aa).

The signal sequence occupies residues 1–20 (MKKLALILFMGTLVSFYADA).

This is an uncharacterized protein from Escherichia coli (strain K12).